A 384-amino-acid chain; its full sequence is S-adenosylmethionine synthase (384 aa).

Residue His15 participates in ATP binding. Asp17 serves as a coordination point for Mg(2+). Residue Glu43 participates in K(+) binding. The L-methionine site is built by Glu56 and Gln99. The flexible loop stretch occupies residues 99 to 109 (QSPDINQGVDR). ATP contacts are provided by residues 164–166 (DAK), 230–231 (RF), Asp239, 245–246 (RK), Ala262, and Lys266. Position 239 (Asp239) interacts with L-methionine. L-methionine is bound at residue Lys270.

This sequence belongs to the AdoMet synthase family. Homotetramer; dimer of dimers. The cofactor is Mg(2+). Requires K(+) as cofactor.

It localises to the cytoplasm. It carries out the reaction L-methionine + ATP + H2O = S-adenosyl-L-methionine + phosphate + diphosphate. Its pathway is amino-acid biosynthesis; S-adenosyl-L-methionine biosynthesis; S-adenosyl-L-methionine from L-methionine: step 1/1. In terms of biological role, catalyzes the formation of S-adenosylmethionine (AdoMet) from methionine and ATP. The overall synthetic reaction is composed of two sequential steps, AdoMet formation and the subsequent tripolyphosphate hydrolysis which occurs prior to release of AdoMet from the enzyme. This chain is S-adenosylmethionine synthase, found in Salmonella agona (strain SL483).